The primary structure comprises 358 residues: MSDADLFSKLDGACDCKSLLKKHCTKERFDAVKDKKTKFGGTIGDCIKSGCLNLDSGVGIYACDPDAYTVFANVLDEVIKDYHKVDKLDHPEPDMGNFEDPGFGDLDPSGDFIVSTRVRVGRSHDSYGFPPVLSKDQIVKMEGDTKAAFEKFSGELAGKYYPLEGMSREESKQLTADHFLFKDDDRFLRDAGGYNNWPSGRGIFFNNNKTFLVWVNEEDHLRLISMQKGGNLAAVYRRLCQAITTMQNSGLSFAKREGLGYLTFCPSNLGTALRASVHMKVPNLAAKADEFKAICEKYNIQARGIHGEHTESEGGVYDLSNKRRLGLTEYQAVMEMKTGVEEILKREKELEGAKGAKK.

Residues 2 to 84 form the Phosphagen kinase N-terminal domain; that stretch reads SDADLFSKLD…LDEVIKDYHK (83 aa). 57–61 contacts substrate; that stretch reads GVGIY. The 239-residue stretch at 112–350 folds into the Phosphagen kinase C-terminal domain; sequence FIVSTRVRVG…EEILKREKEL (239 aa). Residues 115–119 and His178 contribute to the ATP site; that span reads STRVR. Glu218 lines the substrate pocket. Position 222 (Arg222) interacts with ATP. Residue Cys265 participates in substrate binding. Residues 274 to 278 and 303 to 308 contribute to the ATP site; these read RASVH and RGIHGE. Glu308 contributes to the substrate binding site.

It belongs to the ATP:guanido phosphotransferase family.

It carries out the reaction L-arginine + ATP = N(omega)-phospho-L-arginine + ADP + H(+). The chain is Arginine kinase from Turbo cornutus (Horned turban).